We begin with the raw amino-acid sequence, 386 residues long: MIISAASDYRAAAEARLPPFLFHYIDGGAYAEHTLRRNVSDLADIALRQRVLRNMSDLSLSTELFGETLAMPVALAPVGLTGMYARRGEVQAARAAAARGIPFTLSTVSVCPIEEVAPAIDRPMWFQLYVLKDRGFMRNALERAKTAGVTTLVFTVDMPTPGARYRDAHSGMSGPNASLRRMLQAMTHPRWAWDVGLLGKPHDLGNISTYRGSPTGLQDYIGWLAANFDPSISWKDLEWIREFWTGPMVIKGILDPEDARDAVRFGADGIVVSNHGGRQLDGVLSSARALPAIADAVKGELKILADSGIRSGLDVVRMLALGADAVLLGRAFVYALAAGGQAGVENLLTLIEREMRVAMILTGTHSVAEISGDALSRVTREAAVVP.

The region spanning 1-380 is the FMN hydroxy acid dehydrogenase domain; sequence MIISAASDYR…SGDALSRVTR (380 aa). Tyrosine 24 serves as a coordination point for substrate. 2 residues coordinate FMN: serine 106 and glutamine 127. Tyrosine 129 contributes to the substrate binding site. Residue threonine 155 coordinates FMN. Residue arginine 164 coordinates substrate. Lysine 251 serves as a coordination point for FMN. Catalysis depends on histidine 275, which acts as the Proton acceptor. Residue arginine 278 participates in substrate binding. 306–330 contacts FMN; that stretch reads DSGIRSGLDVVRMLALGADAVLLGR.

The protein belongs to the FMN-dependent alpha-hydroxy acid dehydrogenase family. The cofactor is FMN.

Its subcellular location is the cell inner membrane. The catalysed reaction is (S)-lactate + A = pyruvate + AH2. In terms of biological role, catalyzes the conversion of L-lactate to pyruvate. Is coupled to the respiratory chain. The protein is L-lactate dehydrogenase of Xanthomonas campestris pv. campestris (strain 8004).